A 376-amino-acid polypeptide reads, in one-letter code: Cytochrome b (376 aa).

Transmembrane regions (helical) follow at residues 28 to 48 (YGFL…FLAS), 72 to 94 (WCFR…LHIL), 107 to 127 (SWIS…IGYV), and 169 to 189 (FFVL…IHIF). Residues H78 and H92 each contribute to the heme b site. Positions 173 and 187 each coordinate heme b. H192 lines the a ubiquinone pocket. Transmembrane regions (helical) follow at residues 214 to 234 (LLSL…IQSI), 274 to 294 (IPSK…LFLL), 317 to 337 (VPII…CPLP), and 340 to 360 (IFIL…LFSL).

Belongs to the cytochrome b family. In terms of assembly, the main subunits of complex b-c1 are: cytochrome b, cytochrome c1 and the Rieske protein. Heme b serves as cofactor.

Its subcellular location is the mitochondrion inner membrane. In terms of biological role, component of the ubiquinol-cytochrome c reductase complex (complex III or cytochrome b-c1 complex) that is part of the mitochondrial respiratory chain. The b-c1 complex mediates electron transfer from ubiquinol to cytochrome c. Contributes to the generation of a proton gradient across the mitochondrial membrane that is then used for ATP synthesis. This Plasmodium berghei protein is Cytochrome b (MT-CYB).